Here is an 86-residue protein sequence, read N- to C-terminus: Antitoxin VapB33 (86 aa).

Antitoxin component of a type II toxin-antitoxin (TA) system. Upon expression in M.smegmatis neutralizes the effect of cognate toxin VapC33. This Mycobacterium tuberculosis (strain ATCC 25618 / H37Rv) protein is Antitoxin VapB33 (vapB33).